The chain runs to 193 residues: MPEEGSGCSVRRRPYGCVLRAALVPLVAGLVICLVVCIQRFAQAQQQLPLESLGWDVAELQLNHTGPQQDPRLYWQGGPALGRSFLHGPELDKGQLRIHRDGIYMVHIQVTLAICSSTTASRHHPTTLAVGICSPASRSISLLRLSFHQGCTIASQRLTPLARGDTLCTNLTGTLLPSRNTDETFFGVQWVRP.

Residues 1 to 17 (MPEEGSGCSVRRRPYGC) are Cytoplasmic-facing. The chain crosses the membrane as a helical; Signal-anchor for type II membrane protein span at residues 18-38 (VLRAALVPLVAGLVICLVVCI). The Extracellular portion of the chain corresponds to 39–193 (QRFAQAQQQL…TFFGVQWVRP (155 aa)). One can recognise a THD domain in the interval 56 to 191 (DVAELQLNHT…DETFFGVQWV (136 aa)). Asparagine 63 carries an N-linked (GlcNAc...) asparagine glycan. 2 disulfides stabilise this stretch: cysteine 115-cysteine 151 and cysteine 133-cysteine 168. Asparagine 170 carries N-linked (GlcNAc...) asparagine glycosylation.

The protein belongs to the tumor necrosis factor family. Homotrimer. Post-translationally, N-glycosylated.

It is found in the cell membrane. In terms of biological role, expressed at the plasma membrane of B cells, it is the ligand of the CD27 receptor which is specifically expressed at the surface of T cells. The CD70-CD27 signaling pathway mediates antigen-specific T cell activation and expansion which in turn provides immune surveillance of B cells. The chain is CD70 antigen from Homo sapiens (Human).